The primary structure comprises 451 residues: Protein FAM117A (451 aa).

Residues 1–25 (MSGAAAGGRGGGSWGPGRGGAGGLR) are compositionally biased toward gly residues. Disordered regions lie at residues 1-83 (MSGA…RPQP) and 164-183 (RTKL…VQGD). Phosphoserine is present on residues Ser-29 and Ser-67. A coiled-coil region spans residues 149–175 (TDHRKEITKLKQQLQRTKLSRSGKEKE). Ser-193 and Ser-213 each carry phosphoserine. The disordered stretch occupies residues 242-293 (DGHRAPAPPQNSSCDHSLLLEPGNLTSSPSVPLASPQPPSQASREEHQGATE). 2 positions are modified to phosphoserine: Ser-318 and Ser-326. Thr-353 carries the post-translational modification Phosphothreonine. The interval 403–451 (SPGSPLPTASPRAPRKGPEASKASSLPSEPWQRSPPSEESVLFQSSLVV) is disordered. Ser-412 and Ser-426 each carry phosphoserine. The span at 436–451 (SPPSEESVLFQSSLVV) shows a compositional bias: polar residues.

This sequence belongs to the FAM117 family.

The chain is Protein FAM117A (Fam117a) from Mus musculus (Mouse).